The chain runs to 398 residues: Aurofusarin biosynthesis regulatory protein aurR1 (398 aa).

The segment at residues 18–45 is a DNA-binding region (zn(2)-C6 fungal-type); that stretch reads CDNCAKSKVRCGKEQPWCQRCERRGQVC. Disordered regions lie at residues 52–73 and 275–314; these read RSRK…GTPP and AATI…SSLI. 2 stretches are compositionally biased toward basic and acidic residues: residues 56–67 and 289–298; these read RTLDAAHPESDQ and DGKDTERSVS. A compositionally biased stretch (polar residues) spans 299 to 311; the sequence is RDTNVSQDGSEPS.

Its subcellular location is the nucleus. Functionally, transcription factor that specifically regulates the expression of the gene cluster that mediates the biosynthesis of aurofusarin, a red mycelium pigment which is acting as a mycotoxin. This is Aurofusarin biosynthesis regulatory protein aurR1 from Gibberella zeae (strain ATCC MYA-4620 / CBS 123657 / FGSC 9075 / NRRL 31084 / PH-1) (Wheat head blight fungus).